Here is a 1362-residue protein sequence, read N- to C-terminus: DNA-directed RNA polymerase subunit beta (1362 aa).

The protein belongs to the RNA polymerase beta chain family. The RNAP catalytic core consists of 2 alpha, 1 beta, 1 beta' and 1 omega subunit. When a sigma factor is associated with the core the holoenzyme is formed, which can initiate transcription.

The enzyme catalyses RNA(n) + a ribonucleoside 5'-triphosphate = RNA(n+1) + diphosphate. DNA-dependent RNA polymerase catalyzes the transcription of DNA into RNA using the four ribonucleoside triphosphates as substrates. The protein is DNA-directed RNA polymerase subunit beta of Acinetobacter baylyi (strain ATCC 33305 / BD413 / ADP1).